The chain runs to 188 residues: Elongation factor P (188 aa).

It belongs to the elongation factor P family.

Its subcellular location is the cytoplasm. Its pathway is protein biosynthesis; polypeptide chain elongation. Functionally, involved in peptide bond synthesis. Stimulates efficient translation and peptide-bond synthesis on native or reconstituted 70S ribosomes in vitro. Probably functions indirectly by altering the affinity of the ribosome for aminoacyl-tRNA, thus increasing their reactivity as acceptors for peptidyl transferase. This is Elongation factor P from Leptospira interrogans serogroup Icterohaemorrhagiae serovar copenhageni (strain Fiocruz L1-130).